We begin with the raw amino-acid sequence, 59 residues long: Large ribosomal subunit protein eL29 (59 aa).

Over residues 1–26 the composition is skewed to basic residues; it reads MAKSKNHTAHNQTRKAHRNGIKKPKT. The tract at residues 1-37 is disordered; the sequence is MAKSKNHTAHNQTRKAHRNGIKKPKTYKYPSLKGVDP. A Glycyl lysine isopeptide (Lys-Gly) (interchain with G-Cter in ubiquitin) cross-link involves residue K52.

It belongs to the eukaryotic ribosomal protein eL29 family. As to quaternary structure, component of the large ribosomal subunit (LSU). Mature yeast ribosomes consist of a small (40S) and a large (60S) subunit. The 40S small subunit contains 1 molecule of ribosomal RNA (18S rRNA) and 33 different proteins (encoded by 57 genes). The large 60S subunit contains 3 rRNA molecules (25S, 5.8S and 5S rRNA) and 46 different proteins (encoded by 81 genes).

Its subcellular location is the cytoplasm. Component of the ribosome, a large ribonucleoprotein complex responsible for the synthesis of proteins in the cell. The small ribosomal subunit (SSU) binds messenger RNAs (mRNAs) and translates the encoded message by selecting cognate aminoacyl-transfer RNA (tRNA) molecules. The large subunit (LSU) contains the ribosomal catalytic site termed the peptidyl transferase center (PTC), which catalyzes the formation of peptide bonds, thereby polymerizing the amino acids delivered by tRNAs into a polypeptide chain. The nascent polypeptides leave the ribosome through a tunnel in the LSU and interact with protein factors that function in enzymatic processing, targeting, and the membrane insertion of nascent chains at the exit of the ribosomal tunnel. The polypeptide is Large ribosomal subunit protein eL29 (Saccharomyces cerevisiae (strain ATCC 204508 / S288c) (Baker's yeast)).